The primary structure comprises 119 residues: Large ribosomal subunit protein bL20c (119 aa).

Belongs to the bacterial ribosomal protein bL20 family.

The protein resides in the plastid. It is found in the chloroplast. Functionally, binds directly to 23S ribosomal RNA and is necessary for the in vitro assembly process of the 50S ribosomal subunit. It is not involved in the protein synthesizing functions of that subunit. This Triticum aestivum (Wheat) protein is Large ribosomal subunit protein bL20c.